The chain runs to 460 residues: Piperamide synthase (460 aa).

Residues 1–23 (MASSQLEFNVERKQPELLGPAEP) are disordered. Residues H168 and D383 each act as proton acceptor in the active site. A Microbody targeting signal motif is present at residues 458-460 (SRM).

This sequence belongs to the plant acyltransferase family. Monomer. As to expression, confined to immature fruits perisperm. Also detectable in roots.

It is found in the cytoplasm. The enzyme catalyses piperidine + (E,E)-piperoyl-CoA = piperine + CoA + H(+). It functions in the pathway aromatic compound metabolism. Its function is as follows. Involved in the biosynthesis of aromatic piperamides natural products such as piperine (1-piperoyl-piperidine), the pungent principle contributing, together with several terpenoids, to the aromatic properties of black pepper fruits, and displaying numerous pharmacological activities such as antiproliferative, antitumor, antiangiogenesis, antioxidant, antidiabetic, antiobesity, cardioprotective, antimicrobial, antiaging, and immunomodulatory effects. Can use piperidine and benzylamine as acceptors and various CoA-esters with aliphatic and aromatic amines as CoA-donors, including piperoyl-CoA, hexanoyl-CoA and octanoyl-CoA, and, to a lower extent, benzoyl-CoA. Mediates the conversion of piperidine to three piperine isomers in the presence of piperoyl-CoA. Its ability to convert in vitro piperidine to hexanoylpiperidine in the presence of hexanoyl-CoA, and to octanoylpiperidine in the presence of octanoyl-CoA is not confirmed in vivo according to fruits metabolome analysis. The protein is Piperamide synthase of Piper nigrum (Black pepper).